Reading from the N-terminus, the 57-residue chain is LKCYQHGKVVTCHRDMKFCYHNIGMPFRNLKLILQGCSSSCSETENNKCCSTDRCNK.

Disulfide bonds link cysteine 3-cysteine 19, cysteine 12-cysteine 37, cysteine 41-cysteine 49, and cysteine 50-cysteine 55.

This sequence belongs to the three-finger toxin family. Short-chain subfamily. Mambalgin sub-subfamily. As to expression, expressed by the venom gland.

The protein localises to the secreted. In terms of biological role, this three-finger toxin inhibits ASIC channels. It acts as a gating modifier toxin by decreasing the apparent proton sensitivity of activation and by slightly increasing the apparent proton sensitivity for inactivation. It binds more tightly to the closed state and to a much lesser extent the inactivated/desensitized state of ASIC1a. It interacts directly with the outside surface of the thumb domain of chicken ASIC1a (ASIC1a), but does not insert into the acidic pocket as suggested previously. This binding leads to relocation of the thumb domain that could disrupt the acidic pocket of cASIC1a. The peptide exerts both stimulatory and inhibitory effects on ASIC1a. It reversibly inhibits rASIC1a (IC(50)=17 nM), rASIC1b (IC(50)= 44 nM) and rASIC1a-rASIC2a (IC(50)=252 nM) channels. In vivo, it shows a potent naloxone-resistant analgesic effect against acute and inflammatory pain upon central and peripheral injection. In addition, it also has an opioid-independent effect on both thermal and mechanical inflammatory pain after systemic administration and is effective against neuropathic pain. The sequence is that of Mambalgin-3 from Dendroaspis angusticeps (Eastern green mamba).